We begin with the raw amino-acid sequence, 191 residues long: MEYIVEKIGMSRTITNPSIAVTLLRVVNAKVCEVEGGKALVAYPKGKASNKCVAGQQKKYNLSAEYNRFATLEVANTEAGDLDETPLNEAKILKVSFNTKGRGYSGVMKRHNFAGGPASHGSRFHRRHGSIGNREWPGRVQPGMKMAGHYGNTKVTIKNEVVSYDAENKILVVKGAVPGYNGAMGKIRIAK.

The disordered stretch occupies residues 115–137 (GGPASHGSRFHRRHGSIGNREWP).

It belongs to the universal ribosomal protein uL3 family. Part of the 50S ribosomal subunit. Forms a cluster with proteins L14 and L19.

Its function is as follows. One of the primary rRNA binding proteins, it binds directly near the 3'-end of the 23S rRNA, where it nucleates assembly of the 50S subunit. The sequence is that of Large ribosomal subunit protein uL3 (rplC) from Campylobacter jejuni subsp. jejuni serotype O:2 (strain ATCC 700819 / NCTC 11168).